The sequence spans 124 residues: Fluoride-specific ion channel FluC (124 aa).

4 consecutive transmembrane segments (helical) span residues 5–25, 32–52, 61–81, and 94–114; these read LLVS…AVWF, FAFG…ITLG, LLFV…SAEV, and LAVI…GILV. Residues G69 and T72 each coordinate Na(+).

This sequence belongs to the fluoride channel Fluc/FEX (TC 1.A.43) family.

The protein localises to the cell inner membrane. The catalysed reaction is fluoride(in) = fluoride(out). Na(+) is not transported, but it plays an essential structural role and its presence is essential for fluoride channel function. In terms of biological role, fluoride-specific ion channel. Important for reducing fluoride concentration in the cell, thus reducing its toxicity. The polypeptide is Fluoride-specific ion channel FluC (Haemophilus ducreyi (strain 35000HP / ATCC 700724)).